The sequence spans 998 residues: Beta-galactosidase (998 aa).

E431 functions as the Proton donor in the catalytic mechanism. E508 serves as the catalytic Nucleophile.

This sequence belongs to the glycosyl hydrolase 2 family.

It carries out the reaction Hydrolysis of terminal non-reducing beta-D-galactose residues in beta-D-galactosides.. This is Beta-galactosidase (lacZ) from Lactococcus lactis subsp. lactis (strain IL1403) (Streptococcus lactis).